The sequence spans 308 residues: GTP cyclohydrolase FolE2 (308 aa).

The protein belongs to the GTP cyclohydrolase IV family.

It carries out the reaction GTP + H2O = 7,8-dihydroneopterin 3'-triphosphate + formate + H(+). It participates in cofactor biosynthesis; 7,8-dihydroneopterin triphosphate biosynthesis; 7,8-dihydroneopterin triphosphate from GTP: step 1/1. Converts GTP to 7,8-dihydroneopterin triphosphate. The protein is GTP cyclohydrolase FolE2 of Idiomarina loihiensis (strain ATCC BAA-735 / DSM 15497 / L2-TR).